A 353-amino-acid chain; its full sequence is Aromatic amino acid aminotransferase (353 aa).

Residue K217 is modified to N6-(pyridoxal phosphate)lysine.

Belongs to the class-II pyridoxal-phosphate-dependent aminotransferase family. As to quaternary structure, homodimer. It depends on pyridoxal 5'-phosphate as a cofactor.

It catalyses the reaction an aromatic L-alpha-amino acid + 2-oxoglutarate = an aromatic oxo-acid + L-glutamate. Its function is as follows. Aminotransferase that catalyzes the conversion of aromatic amino acids and 2-oxoglutarate into corresponding aromatic oxo acids and L-glutamate. The protein is Aromatic amino acid aminotransferase of Mycobacterium bovis (strain ATCC BAA-935 / AF2122/97).